Here is a 113-residue protein sequence, read N- to C-terminus: CRISPR-associated endoribonuclease Cas2 2 (113 aa).

D32 is a Mg(2+) binding site.

Belongs to the CRISPR-associated endoribonuclease Cas2 protein family. Homodimer, forms a heterotetramer with a Cas1 homodimer. Requires Mg(2+) as cofactor.

In terms of biological role, CRISPR (clustered regularly interspaced short palindromic repeat), is an adaptive immune system that provides protection against mobile genetic elements (viruses, transposable elements and conjugative plasmids). CRISPR clusters contain sequences complementary to antecedent mobile elements and target invading nucleic acids. CRISPR clusters are transcribed and processed into CRISPR RNA (crRNA). Functions as a ssRNA-specific endoribonuclease. Involved in the integration of spacer DNA into the CRISPR cassette. The protein is CRISPR-associated endoribonuclease Cas2 2 (cas22) of Nitrosomonas europaea (strain ATCC 19718 / CIP 103999 / KCTC 2705 / NBRC 14298).